The sequence spans 492 residues: Steroid 21-hydroxylase (492 aa).

Residues R92 and K121 each contribute to the heme b site. A 17alpha-hydroxyprogesterone-binding site is contributed by R232. R232 provides a ligand contact to progesterone. Residues H364, R425, and C427 each contribute to the heme b site.

The protein belongs to the cytochrome P450 family. Requires heme b as cofactor.

The protein localises to the endoplasmic reticulum membrane. It is found in the microsome membrane. The catalysed reaction is progesterone + reduced [NADPH--hemoprotein reductase] + O2 = 21-hydroxyprogesterone + oxidized [NADPH--hemoprotein reductase] + H2O + H(+). The enzyme catalyses 17alpha-hydroxyprogesterone + reduced [NADPH--hemoprotein reductase] + O2 = 11-deoxycortisol + oxidized [NADPH--hemoprotein reductase] + H2O + H(+). A cytochrome P450 monooxygenase that plays a major role in adrenal steroidogenesis. Catalyzes the hydroxylation at C-21 of progesterone and 17alpha-hydroxyprogesterone to respectively form 11-deoxycorticosterone and 11-deoxycortisol, intermediate metabolites in the biosynthetic pathway of mineralocorticoids and glucocorticoids. Mechanistically, uses molecular oxygen inserting one oxygen atom into a substrate, and reducing the second into a water molecule, with two electrons provided by NADPH via cytochrome P450 reductase (CPR; NADPH-ferrihemoprotein reductase). This Sus scrofa (Pig) protein is Steroid 21-hydroxylase (CYP21).